The following is a 383-amino-acid chain: Succinate--CoA ligase [ADP-forming] subunit beta (383 aa).

In terms of domain architecture, ATP-grasp spans 9-236 (KELLGRFGLR…VEAADPQEHR (228 aa)). ATP-binding positions include K45, 52 to 54 (GRG), E91, A94, and E99. 2 residues coordinate Mg(2+): N191 and D205. Residues N256 and 313 to 315 (GIT) contribute to the substrate site.

Belongs to the succinate/malate CoA ligase beta subunit family. Heterotetramer of two alpha and two beta subunits. The cofactor is Mg(2+).

The catalysed reaction is succinate + ATP + CoA = succinyl-CoA + ADP + phosphate. It carries out the reaction GTP + succinate + CoA = succinyl-CoA + GDP + phosphate. It functions in the pathway carbohydrate metabolism; tricarboxylic acid cycle; succinate from succinyl-CoA (ligase route): step 1/1. Succinyl-CoA synthetase functions in the citric acid cycle (TCA), coupling the hydrolysis of succinyl-CoA to the synthesis of either ATP or GTP and thus represents the only step of substrate-level phosphorylation in the TCA. The beta subunit provides nucleotide specificity of the enzyme and binds the substrate succinate, while the binding sites for coenzyme A and phosphate are found in the alpha subunit. The chain is Succinate--CoA ligase [ADP-forming] subunit beta from Rubrobacter xylanophilus (strain DSM 9941 / JCM 11954 / NBRC 16129 / PRD-1).